A 764-amino-acid polypeptide reads, in one-letter code: 5-methyltetrahydropteroyltriglutamate--homocysteine methyltransferase (764 aa).

5-methyltetrahydropteroyltri-L-glutamate-binding positions include 16 to 19 (RELK) and Lys-121. L-homocysteine contacts are provided by residues 440–442 (IGS) and Glu-493. L-methionine is bound by residues 440–442 (IGS) and Glu-493. Residues 524–525 (RC) and Trp-570 each bind 5-methyltetrahydropteroyltri-L-glutamate. An L-homocysteine-binding site is contributed by Asp-608. Position 608 (Asp-608) interacts with L-methionine. 5-methyltetrahydropteroyltri-L-glutamate is bound at residue Glu-614. The Zn(2+) site is built by His-650, Cys-652, and Glu-674. His-703 serves as the catalytic Proton donor. Cys-735 is a Zn(2+) binding site.

It belongs to the vitamin-B12 independent methionine synthase family. Requires Zn(2+) as cofactor.

It catalyses the reaction 5-methyltetrahydropteroyltri-L-glutamate + L-homocysteine = tetrahydropteroyltri-L-glutamate + L-methionine. It functions in the pathway amino-acid biosynthesis; L-methionine biosynthesis via de novo pathway; L-methionine from L-homocysteine (MetE route): step 1/1. In terms of biological role, catalyzes the transfer of a methyl group from 5-methyltetrahydrofolate to homocysteine resulting in methionine formation. In Burkholderia lata (strain ATCC 17760 / DSM 23089 / LMG 22485 / NCIMB 9086 / R18194 / 383), this protein is 5-methyltetrahydropteroyltriglutamate--homocysteine methyltransferase.